The sequence spans 854 residues: Golgin subfamily A member 6-like protein 22 (854 aa).

Disordered regions lie at residues 1–114 (MLMW…HQEA), 320–348 (QEEK…MRRQ), 366–447 (MHEQ…MWRQ), 481–568 (QEEK…MWRQ), 581–681 (RQEE…EQEE), and 714–854 (QEEK…MQEH). Over residues 15–35 (LPTHPHLPTHPHLPTHPHLPT) the composition is skewed to basic residues. Residues 45-66 (MSKETRQSKLAEAKEQLTDHHP) show a composition bias toward basic and acidic residues. 2 stretches are compositionally biased toward polar residues: residues 67-77 (QTNPSVGTAAS) and 85-97 (NNGT…TSGG). Over residues 100–114 (SPEDEQKASHQHQEA) the composition is skewed to basic and acidic residues. Residues 103-854 (DEQKASHQHQ…RQQEEKMQEH (752 aa)) adopt a coiled-coil conformation.

This sequence belongs to the GOLGA6 family.

This Homo sapiens (Human) protein is Golgin subfamily A member 6-like protein 22.